The sequence spans 419 residues: LanC-like protein 3 homolog (419 aa).

This sequence belongs to the LanC-like protein family.

This Drosophila melanogaster (Fruit fly) protein is LanC-like protein 3 homolog.